The following is a 429-amino-acid chain: Adenylosuccinate synthetase (429 aa).

Residues 12–18 (GDEGKGK) and 40–42 (GHT) each bind GTP. Catalysis depends on D13, which acts as the Proton acceptor. Residues D13 and G40 each contribute to the Mg(2+) site. Residues 13–16 (DEGK), 38–41 (NAGH), T128, R142, Q223, T238, and R302 contribute to the IMP site. H41 functions as the Proton donor in the catalytic mechanism. 298–304 (TTTGRAR) contacts substrate. Residues R304, 330–332 (SID), and 412–414 (SVG) each bind GTP.

It belongs to the adenylosuccinate synthetase family. As to quaternary structure, homodimer. It depends on Mg(2+) as a cofactor.

The protein localises to the cytoplasm. It catalyses the reaction IMP + L-aspartate + GTP = N(6)-(1,2-dicarboxyethyl)-AMP + GDP + phosphate + 2 H(+). Its pathway is purine metabolism; AMP biosynthesis via de novo pathway; AMP from IMP: step 1/2. In terms of biological role, plays an important role in the de novo pathway of purine nucleotide biosynthesis. Catalyzes the first committed step in the biosynthesis of AMP from IMP. The sequence is that of Adenylosuccinate synthetase from Oceanobacillus iheyensis (strain DSM 14371 / CIP 107618 / JCM 11309 / KCTC 3954 / HTE831).